The following is a 148-amino-acid chain: Ribonuclease H (148 aa).

The RNase H type-1 domain occupies 3–144 (DKEQVVIYTD…ADQLANRGVA (142 aa)). 4 residues coordinate Mg(2+): Asp-12, Glu-50, Asp-72, and Asp-136. Residues 125-148 (GHTGDPGNERADQLANRGVAELPR) form a disordered region.

Belongs to the RNase H family. Monomer. The cofactor is Mg(2+).

Its subcellular location is the cytoplasm. The catalysed reaction is Endonucleolytic cleavage to 5'-phosphomonoester.. Endonuclease that specifically degrades the RNA of RNA-DNA hybrids. The sequence is that of Ribonuclease H from Pseudomonas paraeruginosa (strain DSM 24068 / PA7) (Pseudomonas aeruginosa (strain PA7)).